A 723-amino-acid polypeptide reads, in one-letter code: MRTLLVDNYDSFTYNLFHYLSRANGREPEVIRNDDPAWRPGLLDAFDNVVLSPGPGTPHRPADFGLCARIAEEGRLPVLGVCLGHQGMALAHGARVGRAPEPRHGRTSAVRHDGTGLFEGLPQPLEVVRYHSLAVTELPPELEATAWSEDGVLMALRHRTLPLWGVQFHPESIGTQDGHRLLANFRDLTERHGRTRHGGRAGHGTLPPPAPARETKATTGTPRRLRVIAKSLPTRWDAEVAFDSLFRTGDHPFWLDSSRPGGELGQLSMMGDASGPLARTAKADVHAGTVTVRADGASSTVESAFLTWLENDLAGLRTEVPELPFAFALGWVGCLGYELKAECDGDAAHRSPDPDAVLVFADRALVLDHRTRTTYLLALVEDDAEAEARAWLAAASATLDAVAGREPEPCPEAPVCTTGPVELRHDRDGYLKLIDVCQQEIAAGETYEVCLTNMAEADTDLTPWAAYRALRRVSPAPFAAFLDFGPMAVLSSSPERFLRIDRHGRMESKPIKGTRPRGATPQEDAALVRALATCEKDRAENLMIVDLVRHDLGRCAEVGSVVADPVFQVETYATVHQLVSTVTARLREDSSPVAAVRAAFPGGSMTGAPKIRTMQIIDRLEGGPRGVYSGAIGYFSLTGAVDLSIVIRTVVLSGGRLRYGVGGAVIALSDPADEFEETAVKAAPLLRLLDTAFPGRERPGKDLDGEPDDGTDAGAPKDLVLPG.

The Glutamine amidotransferase type-1 domain occupies 2–195 (RTLLVDNYDS…RDLTERHGRT (194 aa)). Cys-82 acts as the Nucleophile in catalysis. The tract at residues 96–117 (VGRAPEPRHGRTSAVRHDGTGL) is disordered. The segment covering 98-114 (RAPEPRHGRTSAVRHDG) has biased composition (basic and acidic residues). Catalysis depends on residues His-169 and Glu-171. 2 disordered regions span residues 192-219 (HGRT…KATT) and 693-723 (FPGR…VLPG). The segment at 255 to 723 (LDSSRPGGEL…GAPKDLVLPG (469 aa)) is PABB component. The span at 695–704 (GRERPGKDLD) shows a compositional bias: basic and acidic residues.

The protein in the C-terminal section; belongs to the anthranilate synthase component I family.

It carries out the reaction chorismate + L-glutamine = 4-amino-4-deoxychorismate + L-glutamate. It functions in the pathway antibiotic biosynthesis; candicidin biosynthesis. Functionally, involved in candicidin biosynthesis. Catalyzes the biosynthesis of 4-amino-4-deoxychorismate (ADC) from chorismate and glutamine. The sequence is that of Aminodeoxychorismate synthase from Streptomyces griseus.